Reading from the N-terminus, the 1176-residue chain is Chromosome partition protein Smc (1176 aa).

Residue 32–39 (PNGCGKSN) coordinates ATP. Residues 169-506 (GVSRYKERRR…VKLQEDVQKQ (338 aa)) are a coiled coil. The SMC hinge domain occupies 521–623 (LGRLWQKLHI…TAPDLGQALA (103 aa)). Coiled coils occupy residues 653 to 947 (DSEQ…LAAM) and 987 to 1024 (ERKE…LQAT).

This sequence belongs to the SMC family. In terms of assembly, homodimer.

Its subcellular location is the cytoplasm. Required for chromosome condensation and partitioning. The polypeptide is Chromosome partition protein Smc (Bordetella petrii (strain ATCC BAA-461 / DSM 12804 / CCUG 43448)).